Consider the following 285-residue polypeptide: Ribosomal RNA small subunit methyltransferase A (285 aa).

Residues asparagine 30, leucine 32, glycine 57, glutamate 78, aspartate 101, and asparagine 121 each coordinate S-adenosyl-L-methionine.

It belongs to the class I-like SAM-binding methyltransferase superfamily. rRNA adenine N(6)-methyltransferase family. RsmA subfamily.

The protein localises to the cytoplasm. The enzyme catalyses adenosine(1518)/adenosine(1519) in 16S rRNA + 4 S-adenosyl-L-methionine = N(6)-dimethyladenosine(1518)/N(6)-dimethyladenosine(1519) in 16S rRNA + 4 S-adenosyl-L-homocysteine + 4 H(+). Functionally, specifically dimethylates two adjacent adenosines (A1518 and A1519) in the loop of a conserved hairpin near the 3'-end of 16S rRNA in the 30S particle. May play a critical role in biogenesis of 30S subunits. This chain is Ribosomal RNA small subunit methyltransferase A, found in Treponema pallidum (strain Nichols).